The primary structure comprises 127 residues: MORF4 family-associated protein 1 (127 aa).

The segment at 76 to 97 is disordered; the sequence is ESALNHLQNPDDGAEGRGTKRC. The stretch at 92 to 126 forms a coiled coil; the sequence is RGTKRCEKAEEKAKEIAKMAEMLVELVRRIEKSES.

This sequence belongs to the MORF4 family-associated protein family. In terms of assembly, found in a complex composed of MORF4L1, MRFAP1 and RB1. Interacts via its N-terminus with MORF4L1. Interacts with CSTB and MORF4L2.

It is found in the nucleus. The protein resides in the cytoplasm. The protein localises to the perinuclear region. This chain is MORF4 family-associated protein 1, found in Bos taurus (Bovine).